Consider the following 240-residue polypeptide: ATP-dependent dethiobiotin synthetase BioD (240 aa).

12 to 17 (EIGKTV) provides a ligand contact to ATP. Position 16 (Thr-16) interacts with Mg(2+). Lys-37 is a catalytic residue. Residue Ser-41 coordinates substrate. ATP is bound by residues Asp-54, 115–118 (EGSG), 179–180 (NQ), and 207–209 (PYI). Mg(2+) contacts are provided by Asp-54 and Glu-115.

Belongs to the dethiobiotin synthetase family. Homodimer. Mg(2+) is required as a cofactor.

It is found in the cytoplasm. The enzyme catalyses (7R,8S)-7,8-diammoniononanoate + CO2 + ATP = (4R,5S)-dethiobiotin + ADP + phosphate + 3 H(+). It functions in the pathway cofactor biosynthesis; biotin biosynthesis; biotin from 7,8-diaminononanoate: step 1/2. Functionally, catalyzes a mechanistically unusual reaction, the ATP-dependent insertion of CO2 between the N7 and N8 nitrogen atoms of 7,8-diaminopelargonic acid (DAPA, also called 7,8-diammoniononanoate) to form a ureido ring. The chain is ATP-dependent dethiobiotin synthetase BioD from Clostridium acetobutylicum (strain ATCC 824 / DSM 792 / JCM 1419 / IAM 19013 / LMG 5710 / NBRC 13948 / NRRL B-527 / VKM B-1787 / 2291 / W).